Here is a 471-residue protein sequence, read N- to C-terminus: 3-isopropylmalate dehydratase large subunit (471 aa).

Residues Cys-351, Cys-414, and Cys-417 each coordinate [4Fe-4S] cluster.

It belongs to the aconitase/IPM isomerase family. LeuC type 1 subfamily. Heterodimer of LeuC and LeuD. The cofactor is [4Fe-4S] cluster.

The enzyme catalyses (2R,3S)-3-isopropylmalate = (2S)-2-isopropylmalate. It functions in the pathway amino-acid biosynthesis; L-leucine biosynthesis; L-leucine from 3-methyl-2-oxobutanoate: step 2/4. Its function is as follows. Catalyzes the isomerization between 2-isopropylmalate and 3-isopropylmalate, via the formation of 2-isopropylmaleate. In Colwellia psychrerythraea (strain 34H / ATCC BAA-681) (Vibrio psychroerythus), this protein is 3-isopropylmalate dehydratase large subunit.